Reading from the N-terminus, the 153-residue chain is 6,7-dimethyl-8-ribityllumazine synthase (153 aa).

5-amino-6-(D-ribitylamino)uracil is bound by residues F22, 56-58 (AFE), and 80-82 (AVI). Residue 85–86 (GT) participates in (2S)-2-hydroxy-3-oxobutyl phosphate binding. Catalysis depends on H88, which acts as the Proton donor. F113 lines the 5-amino-6-(D-ribitylamino)uracil pocket. (2S)-2-hydroxy-3-oxobutyl phosphate is bound at residue R127.

It belongs to the DMRL synthase family. As to quaternary structure, forms an icosahedral capsid composed of 60 subunits, arranged as a dodecamer of pentamers.

The catalysed reaction is (2S)-2-hydroxy-3-oxobutyl phosphate + 5-amino-6-(D-ribitylamino)uracil = 6,7-dimethyl-8-(1-D-ribityl)lumazine + phosphate + 2 H2O + H(+). It participates in cofactor biosynthesis; riboflavin biosynthesis; riboflavin from 2-hydroxy-3-oxobutyl phosphate and 5-amino-6-(D-ribitylamino)uracil: step 1/2. Its function is as follows. Catalyzes the formation of 6,7-dimethyl-8-ribityllumazine by condensation of 5-amino-6-(D-ribitylamino)uracil with 3,4-dihydroxy-2-butanone 4-phosphate. This is the penultimate step in the biosynthesis of riboflavin. This is 6,7-dimethyl-8-ribityllumazine synthase from Hydrogenovibrio crunogenus (strain DSM 25203 / XCL-2) (Thiomicrospira crunogena).